A 291-amino-acid chain; its full sequence is 5-hydroxytryptamine receptor 1D (291 aa).

A helical membrane pass occupies residues 30-54; the sequence is LCDIWLSSDITCCTASILHLCVIAL. Cys-31 and Cys-108 are disulfide-bonded. Serotonin is bound by residues Asp-38 and Cys-42. Positions 55–57 match the DRY motif; important for ligand-induced conformation changes motif; it reads DRY. The helical transmembrane segment at 75-96 threads the bilayer; sequence AAAMIAIVWAISICISIPPLFW. N-linked (GlcNAc...) asparagine glycosylation is present at Asn-111. The next 3 helical transmembrane spans lie at 115 to 138, 221 to 246, and 256 to 279; these read ISYT…ILYG, KTLG…VLPI, and ALFD…YTVF. A serotonin-binding site is contributed by Ser-241. The NPxxY motif; important for ligand-induced conformation changes and signaling motif lies at 272-276; that stretch reads NPIIY.

This sequence belongs to the G-protein coupled receptor 1 family. As to quaternary structure, homodimer. Heterodimer with HTR1B.

It localises to the cell membrane. Functionally, G-protein coupled receptor for 5-hydroxytryptamine (serotonin). Also functions as a receptor for ergot alkaloid derivatives, various anxiolytic and antidepressant drugs and other psychoactive substances. Ligand binding causes a conformation change that triggers signaling via guanine nucleotide-binding proteins (G proteins) and modulates the activity of downstream effectors, such as adenylate cyclase. HTR1D is coupled to G(i)/G(o) G alpha proteins and mediates inhibitory neurotransmission by inhibiting adenylate cyclase activity. Regulates the release of 5-hydroxytryptamine in the brain, and thereby affects neural activity. May also play a role in regulating the release of other neurotransmitters. May play a role in vasoconstriction. In Sus scrofa (Pig), this protein is 5-hydroxytryptamine receptor 1D (HTR1D).